Here is a 489-residue protein sequence, read N- to C-terminus: MNKPASIGLLQQPKPFFMIFFVELWERFGYYGVQGILAVYFVHKLGFSQEQAFTTFGAFAALVYGLIAIGGYVGDHLLGTKRTIVLGAIVLTVGYFMTGLSILKPELIFYALGTIAVGNGLFKANPASLLSKCYPPKDPRLDGAFTLFYMSINIGSLFSLAIAPVIAEKFGYAVTYNICGIGLIIALLVYVLYRNTVRNIGSEPDHRPINYKNLLLVLAGTVTMVFVCAWLMHNVKIANIVLIGLSVVIVFIFFREAFKQDKVGRNKMFVAFILMLQAIVFFILYAQMPTSLNFFAINNVHHQLLGFNINPVSFQALNPFWIVVASPILAALYTHWGSRSKDLTMPAKFTVGMFLCSLGFLTAAAAGLWFADEQGLTSPWFIVLVYLFQSLGELMISALGLAMVAALVPQYLMGFILGMWYLTQATSFLLGGYVAAFTAIPEGITDPLETLPVYTNVFGKIGITTFIVAIIMAITVPLLNRMMNGKQKA.

Topologically, residues 1 to 27 are cytoplasmic; it reads MNKPASIGLLQQPKPFFMIFFVELWER. Residues 28–48 form a helical membrane-spanning segment; that stretch reads FGYYGVQGILAVYFVHKLGFS. Residues 49 to 52 are Periplasmic-facing; sequence QEQA. The helical transmembrane segment at 53 to 73 threads the bilayer; the sequence is FTTFGAFAALVYGLIAIGGYV. Topologically, residues 74 to 82 are cytoplasmic; it reads GDHLLGTKR. A helical membrane pass occupies residues 83-103; it reads TIVLGAIVLTVGYFMTGLSIL. Over 104–106 the chain is Periplasmic; sequence KPE. The chain crosses the membrane as a helical span at residues 107–127; that stretch reads LIFYALGTIAVGNGLFKANPA. Residues 128 to 146 lie on the Cytoplasmic side of the membrane; that stretch reads SLLSKCYPPKDPRLDGAFT. A helical membrane pass occupies residues 147-167; sequence LFYMSINIGSLFSLAIAPVIA. The Periplasmic segment spans residues 168-171; that stretch reads EKFG. A helical membrane pass occupies residues 172–192; the sequence is YAVTYNICGIGLIIALLVYVL. Residues 193–212 are Cytoplasmic-facing; the sequence is YRNTVRNIGSEPDHRPINYK. Helical transmembrane passes span 213-233 and 234-254; these read NLLL…WLMH and NVKI…FIFF. Residues 255-267 lie on the Cytoplasmic side of the membrane; sequence REAFKQDKVGRNK. The helical transmembrane segment at 268–288 threads the bilayer; the sequence is MFVAFILMLQAIVFFILYAQM. At 289–311 the chain is on the periplasmic side; sequence PTSLNFFAINNVHHQLLGFNINP. A helical transmembrane segment spans residues 312–332; that stretch reads VSFQALNPFWIVVASPILAAL. The Cytoplasmic segment spans residues 333-350; it reads YTHWGSRSKDLTMPAKFT. The chain crosses the membrane as a helical span at residues 351 to 371; that stretch reads VGMFLCSLGFLTAAAAGLWFA. Over 372 to 375 the chain is Periplasmic; sequence DEQG. A helical membrane pass occupies residues 376 to 396; that stretch reads LTSPWFIVLVYLFQSLGELMI. The Cytoplasmic portion of the chain corresponds to 397-419; the sequence is SALGLAMVAALVPQYLMGFILGM. A helical membrane pass occupies residues 420–440; sequence WYLTQATSFLLGGYVAAFTAI. Topologically, residues 441–456 are periplasmic; that stretch reads PEGITDPLETLPVYTN. The helical transmembrane segment at 457–477 threads the bilayer; sequence VFGKIGITTFIVAIIMAITVP. Over 478-489 the chain is Cytoplasmic; sequence LLNRMMNGKQKA.

It belongs to the major facilitator superfamily. Proton-dependent oligopeptide transporter (POT/PTR) (TC 2.A.17) family. DtpB subfamily.

It is found in the cell inner membrane. In terms of biological role, proton-dependent permease that transports di- and tripeptides. The polypeptide is Dipeptide and tripeptide permease B (Photorhabdus asymbiotica subsp. asymbiotica (strain ATCC 43949 / 3105-77) (Xenorhabdus luminescens (strain 2))).